The sequence spans 291 residues: MEMO1 family protein PH1626 (291 aa).

Belongs to the MEMO1 family.

The protein is MEMO1 family protein PH1626 of Pyrococcus horikoshii (strain ATCC 700860 / DSM 12428 / JCM 9974 / NBRC 100139 / OT-3).